The following is a 29-amino-acid chain: KKDGYLVNKYTGCKVNCYKLGENKFCNRE.

In terms of domain architecture, LCN-type CS-alpha/beta spans 2–29 (KDGYLVNKYTGCKVNCYKLGENKFCNRE).

This sequence belongs to the long (4 C-C) scorpion toxin superfamily. Sodium channel inhibitor family. Beta subfamily. Expressed by the venom gland.

It localises to the secreted. In terms of biological role, binds to sodium channels (Nav) and shift the voltage of activation toward more negative potentials. This toxin is active on crustaceans. This is Toxin II.9 from Centruroides limpidus (Mexican scorpion).